The chain runs to 167 residues: Troponin C-akin-1 protein (167 aa).

17 to 20 is a substrate binding site; sequence YGAL. Glu92 (proton acceptor) is an active-site residue.

It belongs to the gamma-glutamylcyclotransferase family. As to expression, in embryos, expression is seen in heart cells of the dorsal vessel and hindgut visceral mesoderm.

Functionally, putative gamma-glutamylcyclotransferase. The polypeptide is Troponin C-akin-1 protein (Tina-1) (Drosophila melanogaster (Fruit fly)).